Reading from the N-terminus, the 76-residue chain is Conotoxin ArMLCL-022 (76 aa).

The first 19 residues, M1–S19, serve as a signal peptide directing secretion. The propeptide occupies N20–K52.

It belongs to the conotoxin T superfamily. As to expression, expressed by the venom duct.

It is found in the secreted. In Conus arenatus (Sand-dusted cone), this protein is Conotoxin ArMLCL-022.